A 419-amino-acid polypeptide reads, in one-letter code: Putative nickel insertion protein (419 aa).

The disordered stretch occupies residues 69-90 (HDPSNHPSQNTHHHHHHHTRHL). The span at 79–88 (THHHHHHHTR) shows a compositional bias: basic residues.

This sequence belongs to the LarC family.

This is Putative nickel insertion protein from Rippkaea orientalis (strain PCC 8801 / RF-1) (Cyanothece sp. (strain PCC 8801)).